The sequence spans 290 residues: HTH-type transcriptional activator RhaR (290 aa).

An HTH araC/xylS-type domain is found at 179-277 (DLIMSALQQS…GMTPRDYRQR (99 aa)). 2 DNA-binding regions (H-T-H motif) span residues 196–217 (ADFC…RQQT) and 244–267 (ISDI…TREA).

In terms of assembly, binds DNA as a dimer.

The protein localises to the cytoplasm. Functionally, activates expression of the rhaSR operon in response to L-rhamnose. This Yersinia pestis bv. Antiqua (strain Antiqua) protein is HTH-type transcriptional activator RhaR.